The following is a 372-amino-acid chain: Aminomethyltransferase (372 aa).

It belongs to the GcvT family. The glycine cleavage system is composed of four proteins: P, T, L and H.

The enzyme catalyses N(6)-[(R)-S(8)-aminomethyldihydrolipoyl]-L-lysyl-[protein] + (6S)-5,6,7,8-tetrahydrofolate = N(6)-[(R)-dihydrolipoyl]-L-lysyl-[protein] + (6R)-5,10-methylene-5,6,7,8-tetrahydrofolate + NH4(+). Functionally, the glycine cleavage system catalyzes the degradation of glycine. The chain is Aminomethyltransferase from Streptomyces avermitilis (strain ATCC 31267 / DSM 46492 / JCM 5070 / NBRC 14893 / NCIMB 12804 / NRRL 8165 / MA-4680).